We begin with the raw amino-acid sequence, 181 residues long: Peptide deformylase (181 aa).

2 residues coordinate Fe cation: Cys99 and His141. The active site involves Glu142. His145 serves as a coordination point for Fe cation.

It belongs to the polypeptide deformylase family. Fe(2+) serves as cofactor.

It carries out the reaction N-terminal N-formyl-L-methionyl-[peptide] + H2O = N-terminal L-methionyl-[peptide] + formate. Functionally, removes the formyl group from the N-terminal Met of newly synthesized proteins. Requires at least a dipeptide for an efficient rate of reaction. N-terminal L-methionine is a prerequisite for activity but the enzyme has broad specificity at other positions. In Chlamydia trachomatis serovar A (strain ATCC VR-571B / DSM 19440 / HAR-13), this protein is Peptide deformylase.